We begin with the raw amino-acid sequence, 788 residues long: Protocadherin beta-18 (788 aa).

The signal sequence occupies residues 1-28 (MEPGKGRAQPTRQVLLFFVFLGGSLVYS). Cadherin domains are found at residues 29–133 (ETWS…TPTF), 134–242 (LNNH…APEF), 243–347 (EKPV…PPEI), 348–452 (AMTS…APAF), and 453–562 (TQTS…SPFV). Topologically, residues 29 to 691 (ETWSYSIAEE…AQADSLTVYL (663 aa)) are extracellular. A glycan (N-linked (GlcNAc...) asparagine) is linked at N169. N419 and N437 each carry an N-linked (GlcNAc...) asparagine glycan. Residue N568 is glycosylated (N-linked (GlcNAc...) asparagine). One can recognise a Cadherin 6 domain in the interval 569 to 672 (GSAPCTELVP…LVDGFSQPYL (104 aa)). The helical transmembrane segment at 692-712 (VVALASVSSLFLFSVFLFVAV) threads the bilayer. The Cytoplasmic segment spans residues 713–788 (RLCRRSRAAS…DSDMEKAPPF (76 aa)).

The protein localises to the cell membrane. Its function is as follows. Potential calcium-dependent cell-adhesion protein. This chain is Protocadherin beta-18 (PCDHB18), found in Pan troglodytes (Chimpanzee).